A 176-amino-acid chain; its full sequence is MRNKPFYLLCAFLWLAVSHALAADSTITIRGYVRDNGCSVAAESTNFTVDLMENAAKQFNNIGATTPVVPFRILLSPCGNAVSAVKVGFTGVADSHNANLLALENTVSAASGLGIQLLNEQQNQIPLNAPSSALSWTTLTPGKPNTLNFYARLMATQVPVTAGHINATATFTLEYQ.

The N-terminal stretch at 1 to 20 (MRNKPFYLLCAFLWLAVSHA) is a signal peptide. A disulfide bridge connects residues Cys-38 and Cys-78.

It belongs to the fimbrial protein family.

Its subcellular location is the fimbrium. Functionally, involved in regulation of length and mediation of adhesion of type 1 fimbriae (but not necessary for the production of fimbriae). Involved in the integration of FimH in the fimbriae. The chain is Protein FimF (fimF) from Escherichia coli (strain K12).